The chain runs to 425 residues: 5-methylthioadenosine/S-adenosylhomocysteine deaminase (425 aa).

2 residues coordinate Zn(2+): H63 and H65. Substrate is bound by residues E92 and H184. H211 is a Zn(2+) binding site. E214 and D299 together coordinate substrate. D299 contributes to the Zn(2+) binding site.

The protein belongs to the metallo-dependent hydrolases superfamily. MTA/SAH deaminase family. The cofactor is Zn(2+).

The catalysed reaction is S-adenosyl-L-homocysteine + H2O + H(+) = S-inosyl-L-homocysteine + NH4(+). It catalyses the reaction S-methyl-5'-thioadenosine + H2O + H(+) = S-methyl-5'-thioinosine + NH4(+). Catalyzes the deamination of 5-methylthioadenosine and S-adenosyl-L-homocysteine into 5-methylthioinosine and S-inosyl-L-homocysteine, respectively. Is also able to deaminate adenosine. In Pyrococcus abyssi (strain GE5 / Orsay), this protein is 5-methylthioadenosine/S-adenosylhomocysteine deaminase.